The following is a 985-amino-acid chain: MNGSGGRQMQCGKKADDKSLLARFFHADRSLTAVASELDSFDGRAEPDRCTRLVSKLRLNQDKVLAITNLIMEELLGEDRDPRAFRAKFPEEVLQENLAGQLWFGAECLAAGSSIMNREAESKEMRPLAQAVTKSLGNVRVLLRDQCLRNNVPNSKTLQLDLNDSTTEQLYESLKIFDRLFAEFELSYVSAMVQVKSRHEYEMQQWIGVLFSETLQRALKIGLLDQDMVDAFDPGLMFSIPRLAIVAGLVVYAKGPLNMDMPGDQLSEMFRPFRTILIKIRDLLRNLNHEELYQLEKVLCTNEDINAKAPLGSSSIEAPSPEHSSHHPTTSSNNNNNNGDTTGTTNTHRTVERLVDQRNNNNNNNTSSAPALDKAANRSPSMLSLSPNSTPTASPAPSPTPSHSIASTSSSATGSTHPPADWSDGDDEDEEDDDDDIEVEEEELDSTDDETDEEQLLKDIVAADCASGYLIPNTNLGNLLQPQEVPLTDNFVASEDDEYGAGEQQRQRHRDGQEDEPSTSAAMLAASRTLQRLRLPSSDAEPLAEQSTIKTPEQEQDQPHQSVYRHRHSHRHHHRHHHHHHQRHHHHQHQQPPQPHPHRTTRSGRKRCSLDSTESEATQPERDREPSQASGDTSAASSLSDDVSLAMRNTTARLKFKSTENLLHRLFVCIAGVADQLQTNFASDLRQILRSVFLMNMSSAQEEIDIPEKTKESELFEFRASENDVIQESAGSNQSIYSAEEVNPELDNVFSAGSGGGSPGNGNQANASAQRHSAGGSIQRNNTVDDGSPTGGGALLATSRSHVMRSRSLGDQESASTSTSSSQLHQEQQQLQIQVQRQRNNSVGSNTPSSASSTSSSSEQNSPVSARSGSRRRLQSNNETQMPSSATVTTTATATLAPPAWIPDGKAPRCMSCQTPFTAFRRRHHCRNCGGVFCGVCSNASAPLPKYGLTKAVRVCRECYVREVRSGMSVQGVPSVQERLTATAS.

Disordered stretches follow at residues P310 to E453, E498 to S520, L533 to S640, and D747 to A892. Composition is skewed to low complexity over residues H327–H348, S384–A393, and P401–W422. Over residues S423 to E453 the composition is skewed to acidic residues. S537 and S538 each carry phosphoserine. Composition is skewed to basic residues over residues V563–H589 and H596–R607. Composition is skewed to low complexity over residues A629–S640 and N761–Q770. The span at G776 to D785 shows a compositional bias: polar residues. Phosphoserine is present on S808. Positions Q812–A866 are enriched in low complexity. A compositionally biased stretch (polar residues) spans Q875–S885. The FYVE-type zinc-finger motif lies at D904–V964. Zn(2+)-binding residues include C910, C913, C926, C929, C934, C937, C956, and C959.

It belongs to the lst-2 family.

Negative regulator of epidermal growth factor receptor (EGFR) signaling. This Drosophila ananassae (Fruit fly) protein is Lateral signaling target protein 2 homolog.